The chain runs to 289 residues: Oxaloacetate decarboxylase (289 aa).

Serine 47 contributes to the substrate binding site. Residue aspartate 85 participates in Mg(2+) binding. The substrate site is built by arginine 156 and histidine 232.

The protein belongs to the isocitrate lyase/PEP mutase superfamily. Oxaloacetate decarboxylase family. As to quaternary structure, homotetramer; dimer of dimers. Requires Mg(2+) as cofactor.

It carries out the reaction oxaloacetate + H(+) = pyruvate + CO2. In terms of biological role, catalyzes the decarboxylation of oxaloacetate into pyruvate. Seems to play a role in maintaining cellular concentrations of bicarbonate and pyruvate. This Rhodopseudomonas palustris (strain HaA2) protein is Oxaloacetate decarboxylase.